Consider the following 419-residue polypeptide: Tyrosine--tRNA ligase 2 (419 aa).

Y34 contributes to the L-tyrosine binding site. The short motif at 39 to 48 (PTGDSMHIGH) is the 'HIGH' region element. L-tyrosine-binding residues include Y168 and Q172. Residues 230–234 (KFGKS) carry the 'KMSKS' region motif. Residue K233 participates in ATP binding. Residues 352 to 418 (KNIVEWLVDL…GKKNYSLVKL (67 aa)) form the S4 RNA-binding domain.

This sequence belongs to the class-I aminoacyl-tRNA synthetase family. TyrS type 1 subfamily. Homodimer.

The protein localises to the cytoplasm. The enzyme catalyses tRNA(Tyr) + L-tyrosine + ATP = L-tyrosyl-tRNA(Tyr) + AMP + diphosphate + H(+). Its function is as follows. Catalyzes the attachment of tyrosine to tRNA(Tyr) in a two-step reaction: tyrosine is first activated by ATP to form Tyr-AMP and then transferred to the acceptor end of tRNA(Tyr). The sequence is that of Tyrosine--tRNA ligase 2 from Bacillus cereus (strain ATCC 10987 / NRS 248).